The chain runs to 826 residues: Copper-transporting ATPase 1 (826 aa).

HMA domains lie at 15–80 and 82–147; these read APTD…YEPK and IIQE…YDVR. 4 residues coordinate Cu cation: Cys-26, Cys-29, Cys-93, and Cys-96. 6 consecutive transmembrane segments (helical) span residues 172–192, 209–229, 246–266, 270–290, 429–449, and 457–477; these read LVIL…GSHF, NLYI…LRFF, LVVL…FASG, SGTA…ILLG, AWFV…WYVF, and FALV…MGLA. Catalysis depends on Asp-514, which acts as the 4-aspartylphosphate intermediate. The Mg(2+) site is built by Asp-713 and Asp-717. The next 2 helical transmembrane spans lie at 772 to 792 and 795 to 815; these read FWAF…LYPL and TLLS…FVLG.

Belongs to the cation transport ATPase (P-type) (TC 3.A.3) family. Type IB subfamily.

The protein localises to the cell membrane. The catalysed reaction is Cu(2+)(in) + ATP + H2O = Cu(2+)(out) + ADP + phosphate + H(+). In terms of biological role, involved in copper transport. This is Copper-transporting ATPase 1 (actP1) from Rhizobium meliloti (strain 1021) (Ensifer meliloti).